A 195-amino-acid chain; its full sequence is Interferon tau-11 (195 aa).

The N-terminal stretch at 1–23 is a signal peptide; sequence MAFVLSLLMALVLVSYGPGGSLG. 2 cysteine pairs are disulfide-bonded: C24–C122 and C52–C162. A glycan (N-linked (GlcNAc...) asparagine) is linked at N101.

It belongs to the alpha/beta interferon family. IFN-alphaII subfamily. Constitutively and exclusively expressed in the mononuclear cells of the extraembryonic trophectoderm.

It is found in the secreted. Paracrine hormone primarily responsible for maternal recognition of pregnancy. Interacts with endometrial receptors, probably type I interferon receptors, and blocks estrogen receptor expression, preventing the estrogen-induced increase in oxytocin receptor expression in the endometrium. This results in the suppression of the pulsatile endometrial release of the luteolytic hormone prostaglandin F2-alpha, hindering the regression of the corpus luteum (luteolysis) and therefore a return to ovarian cyclicity. This, and a possible direct effect of IFN-tau on prostaglandin synthesis, leads in turn to continued ovarian progesterone secretion, which stimulates the secretion by the endometrium of the nutrients required for the growth of the conceptus. In summary, displays particularly high antiviral and antiproliferative potency concurrently with particular weak cytotoxicity, high antiluteolytic activity and immunomodulatory properties. In contrast with other IFNs, IFN-tau is not virally inducible. The polypeptide is Interferon tau-11 (IFNT11) (Ovis aries (Sheep)).